A 310-amino-acid polypeptide reads, in one-letter code: UDP-N-acetylenolpyruvoylglucosamine reductase (310 aa).

Residues 31–216 form the FAD-binding PCMH-type domain; sequence KIGGPADYFV…LRKIEELNQA (186 aa). The active site involves R180. Residue S230 is the Proton donor of the active site. E300 is an active-site residue.

It belongs to the MurB family. FAD serves as cofactor.

The protein resides in the cytoplasm. The enzyme catalyses UDP-N-acetyl-alpha-D-muramate + NADP(+) = UDP-N-acetyl-3-O-(1-carboxyvinyl)-alpha-D-glucosamine + NADPH + H(+). It participates in cell wall biogenesis; peptidoglycan biosynthesis. Functionally, cell wall formation. This is UDP-N-acetylenolpyruvoylglucosamine reductase from Lachnoclostridium phytofermentans (strain ATCC 700394 / DSM 18823 / ISDg) (Clostridium phytofermentans).